Reading from the N-terminus, the 358-residue chain is Zinc transporter ZIP1 (358 aa).

Residues 1–7 are Extracellular-facing; the sequence is MDLLFAK. The chain crosses the membrane as a helical span at residues 8 to 28; that stretch reads IICIGIFLVVTTFGCFIPHLM. Topologically, residues 29–53 are cytoplasmic; that stretch reads GLYKEKENEEKNKRVKNILSNLNCF. Residues 54-74 traverse the membrane as a helical segment; it reads GSGFIFSIIMFHLLPETIHII. The Extracellular segment spans residues 75 to 91; sequence SDHGNIRIFNTSDSQMK. Residues 92 to 112 form a helical membrane-spanning segment; sequence ILYIFFFVFIGFCMQLGLEYV. Residues 113-186 lie on the Cytoplasmic side of the membrane; the sequence is LPVDTNICCV…GKFLEILTLQ (74 aa). The chain crosses the membrane as a helical span at residues 187–207; sequence SFFLTISLAIHSCIEGMIIGT. Over 208-213 the chain is Extracellular; sequence STDVNY. Residues 214–234 form a helical membrane-spanning segment; sequence VFISSFCILLHKWIAGVTVSL. At 235–246 the chain is on the cytoplasmic side; that stretch reads SLNSNNMNKTLK. Residues 247–267 form a helical membrane-spanning segment; sequence AILLLTFVFASPLGIVLGHMA. The Extracellular segment spans residues 268–273; that stretch reads KSAGQK. Residues 274-294 traverse the membrane as a helical segment; that stretch reads VTCLINAVSIGTLLFIGCEIL. The Cytoplasmic portion of the chain corresponds to 295 to 310; the sequence is LNEIKQNISRKVRLCK. The chain crosses the membrane as a helical span at residues 311-331; sequence WLSFCFSCLIAFALISFTTSM. Topologically, residues 332–358 are extracellular; sequence APHTHGDIDTHVHVHHHDHDHDHGHNH.

This sequence belongs to the ZIP transporter (TC 2.A.5) family. As to quaternary structure, homodimer.

The protein localises to the plastid. Its subcellular location is the apicoplast. It localises to the cell membrane. It carries out the reaction Zn(2+)(in) = Zn(2+)(out). The enzyme catalyses Fe(2+)(in) = Fe(2+)(out). Its function is as follows. Transporter for the divalent zinc cation. Mediates the influx of zinc into cells from extracellular space. Can transport divalent iron ions. Does not transport manganese and cadmium cations. This is Zinc transporter ZIP1 from Plasmodium falciparum (isolate 3D7).